The sequence spans 225 residues: DNA-binding response regulator MtrA (225 aa).

A Response regulatory domain is found at 4–117 (RILVVDDDAS…ELVARVRARL (114 aa)). Asp53 is modified (4-aspartylphosphate). The segment at residues 125 to 224 (AEMLSIADVE…VRGVGYKAGP (100 aa)) is a DNA-binding region (ompR/PhoB-type).

Post-translationally, phosphorylated by MtrB.

Member of the two-component regulatory system MtrA/MtrB. The sequence is that of DNA-binding response regulator MtrA (mtrA) from Mycolicibacterium paratuberculosis (strain ATCC BAA-968 / K-10) (Mycobacterium paratuberculosis).